An 81-amino-acid polypeptide reads, in one-letter code: Small cysteine-rich protein 4 (81 aa).

A signal peptide spans 1 to 23 (MDTKVACLLLIILGALTVQGAVS). Positions 24–25 (GN) are excised as a propeptide.

Belongs to the Cnidaria small cysteine-rich protein (SCRiP) family. beta subfamily. Contains 4 disulfide bonds.

The protein resides in the secreted. The protein localises to the nematocyst. Its function is as follows. Induces neurotoxic symptoms on zebrafish. Has also been claimed to be implied in calcification, but tests on homolog proteins suggest that proteins of this family have a neurotoxic function and not a calcification function. The polypeptide is Small cysteine-rich protein 4 (Orbicella faveolata (Mountainous star coral)).